Here is a 310-residue protein sequence, read N- to C-terminus: MDWKGRDVISIRDFSKEDIEFVLKVAERLEEELNEKGSLDYARGKILATLFFEPSTRTRLSFESAMHRLGGSVIGFSSASSTSVKKGESLADTIKTVEQYSDVIVIRHPMEGAARLAAEVAGIPVINAGDGSNQHPTQTLLDLYTIKKAFGKIDGLTIGLLGDLKYGRTVHSLAEALAFYDVELYLISPELLRMPKHIVDELRERGVKVYETTDLEGAIPKLDVLYVTRIQRERFPDEEEYLKVKGSYQVNLEVLKNAKETLKVMHPLPRVDEIHPEVDKTKHALYFRQVFSGVPVRMALLGLTLGVLGV.

2 residues coordinate carbamoyl phosphate: Arg-57 and Thr-58. Lys-86 lines the L-aspartate pocket. Arg-107, His-135, and Gln-138 together coordinate carbamoyl phosphate. The L-aspartate site is built by Arg-168 and Arg-229. Carbamoyl phosphate contacts are provided by Leu-268 and Pro-269.

It belongs to the aspartate/ornithine carbamoyltransferase superfamily. ATCase family. As to quaternary structure, heterooligomer of catalytic and regulatory chains.

The catalysed reaction is carbamoyl phosphate + L-aspartate = N-carbamoyl-L-aspartate + phosphate + H(+). Its pathway is pyrimidine metabolism; UMP biosynthesis via de novo pathway; (S)-dihydroorotate from bicarbonate: step 2/3. Its function is as follows. Catalyzes the condensation of carbamoyl phosphate and aspartate to form carbamoyl aspartate and inorganic phosphate, the committed step in the de novo pyrimidine nucleotide biosynthesis pathway. The protein is Aspartate carbamoyltransferase catalytic subunit of Thermococcus kodakarensis (strain ATCC BAA-918 / JCM 12380 / KOD1) (Pyrococcus kodakaraensis (strain KOD1)).